We begin with the raw amino-acid sequence, 155 residues long: Interleukin-2 (155 aa).

Residues 1–20 (MYKIQLLSCIALTLALVANG) form the signal peptide. O-linked (GalNAc...) threonine glycosylation is present at Thr-23. An intrachain disulfide couples Cys-79 to Cys-127.

It belongs to the IL-2 family.

It localises to the secreted. Its function is as follows. Cytokine produced by activated CD4-positive helper T-cells and to a lesser extend activated CD8-positive T-cells and natural killer (NK) cells that plays pivotal roles in the immune response and tolerance. Binds to a receptor complex composed of either the high-affinity trimeric IL-2R (IL2RA/CD25, IL2RB/CD122 and IL2RG/CD132) or the low-affinity dimeric IL-2R (IL2RB and IL2RG). Interaction with the receptor leads to oligomerization and conformation changes in the IL-2R subunits resulting in downstream signaling starting with phosphorylation of JAK1 and JAK3. In turn, JAK1 and JAK3 phosphorylate the receptor to form a docking site leading to the phosphorylation of several substrates including STAT5. This process leads to activation of several pathways including STAT, phosphoinositide-3-kinase/PI3K and mitogen-activated protein kinase/MAPK pathways. Functions as a T-cell growth factor and can increase NK-cell cytolytic activity as well. Promotes strong proliferation of activated B-cells and subsequently immunoglobulin production. Plays a pivotal role in regulating the adaptive immune system by controlling the survival and proliferation of regulatory T-cells, which are required for the maintenance of immune tolerance. Moreover, participates in the differentiation and homeostasis of effector T-cell subsets, including Th1, Th2, Th17 as well as memory CD8-positive T-cells. The sequence is that of Interleukin-2 (IL2) from Ovis aries (Sheep).